Consider the following 688-residue polypeptide: Elongation factor G (688 aa).

Positions 8-282 constitute a tr-type G domain; sequence ERTRNIGIMA…AVLDYLPAPT (275 aa). GTP contacts are provided by residues 17–24, 81–85, and 135–138; these read AHIDAGKT, DTPGH, and NKMD.

This sequence belongs to the TRAFAC class translation factor GTPase superfamily. Classic translation factor GTPase family. EF-G/EF-2 subfamily.

The protein resides in the cytoplasm. Its function is as follows. Catalyzes the GTP-dependent ribosomal translocation step during translation elongation. During this step, the ribosome changes from the pre-translocational (PRE) to the post-translocational (POST) state as the newly formed A-site-bound peptidyl-tRNA and P-site-bound deacylated tRNA move to the P and E sites, respectively. Catalyzes the coordinated movement of the two tRNA molecules, the mRNA and conformational changes in the ribosome. This is Elongation factor G from Clostridioides difficile (strain 630) (Peptoclostridium difficile).